A 439-amino-acid polypeptide reads, in one-letter code: 26S proteasome regulatory subunit 6A (439 aa).

Met-1 is subject to N-acetylmethionine. Ser-9 is modified (phosphoserine). Residue 227 to 234 (GPPGTGKT) participates in ATP binding. Residue Ser-376 is modified to Phosphoserine.

The protein belongs to the AAA ATPase family. Component of the 19S proteasome regulatory particle complex. The 26S proteasome consists of a 20S core particle (CP) and two 19S regulatory subunits (RP). The regulatory particle is made of a lid composed of 9 subunits, a base containing 6 ATPases including PSMC3 and few additional components. Interacts with PAAF1.

The protein localises to the cytoplasm. Its subcellular location is the nucleus. Functionally, component of the 26S proteasome, a multiprotein complex involved in the ATP-dependent degradation of ubiquitinated proteins. This complex plays a key role in the maintenance of protein homeostasis by removing misfolded or damaged proteins, which could impair cellular functions, and by removing proteins whose functions are no longer required. Therefore, the proteasome participates in numerous cellular processes, including cell cycle progression, apoptosis, or DNA damage repair. PSMC3 belongs to the heterohexameric ring of AAA (ATPases associated with diverse cellular activities) proteins that unfolds ubiquitinated target proteins that are concurrently translocated into a proteolytic chamber and degraded into peptides. The sequence is that of 26S proteasome regulatory subunit 6A (Psmc3) from Rattus norvegicus (Rat).